The following is a 158-amino-acid chain: 2-C-methyl-D-erythritol 2,4-cyclodiphosphate synthase (158 aa).

The a divalent metal cation site is built by Asp-9 and His-11. Residues 9–11 (DVH) and 35–36 (HS) contribute to the 4-CDP-2-C-methyl-D-erythritol 2-phosphate site. His-43 lines the a divalent metal cation pocket. 4-CDP-2-C-methyl-D-erythritol 2-phosphate-binding positions include 57-59 (DIG), 62-66 (FPDTD), 101-107 (AQAPKMA), 133-136 (TTTE), Phe-140, and Arg-143.

The protein belongs to the IspF family. In terms of assembly, homotrimer. A divalent metal cation serves as cofactor.

The catalysed reaction is 4-CDP-2-C-methyl-D-erythritol 2-phosphate = 2-C-methyl-D-erythritol 2,4-cyclic diphosphate + CMP. It functions in the pathway isoprenoid biosynthesis; isopentenyl diphosphate biosynthesis via DXP pathway; isopentenyl diphosphate from 1-deoxy-D-xylulose 5-phosphate: step 4/6. Functionally, involved in the biosynthesis of isopentenyl diphosphate (IPP) and dimethylallyl diphosphate (DMAPP), two major building blocks of isoprenoid compounds. Catalyzes the conversion of 4-diphosphocytidyl-2-C-methyl-D-erythritol 2-phosphate (CDP-ME2P) to 2-C-methyl-D-erythritol 2,4-cyclodiphosphate (ME-CPP) with a corresponding release of cytidine 5-monophosphate (CMP). The protein is 2-C-methyl-D-erythritol 2,4-cyclodiphosphate synthase of Vibrio campbellii (strain ATCC BAA-1116).